The following is a 127-amino-acid chain: Large ribosomal subunit protein bL17 (127 aa).

This sequence belongs to the bacterial ribosomal protein bL17 family. In terms of assembly, part of the 50S ribosomal subunit. Contacts protein L32.

This chain is Large ribosomal subunit protein bL17, found in Lacticaseibacillus casei (strain BL23) (Lactobacillus casei).